The sequence spans 42 residues: Snaclec lebecetin subunit alpha (42 aa).

The C-type lectin domain maps to 1-42 (DQDCLPGWSSHEGHCYKVFNLDKTWEDAEKFCTEQPSNGHLV). The cysteines at positions 4 and 15 are disulfide-linked.

As to quaternary structure, heterodimer of subunits alpha and beta; disulfide-linked. Requires Ca(2+) as cofactor. Post-translationally, glycosylated. As to expression, expressed by the venom gland.

The protein resides in the secreted. Functionally, binds to the platelet GPIb/IX/V receptor system and inhibits ristocetin-induced platelet aggregation in human platelet-rich plasma. Strongly inhibits platelet aggregation induced by ADP, calcium ionophore, thrombin and collagen. Does not inhibit U46619-induced platelet aggregation. This Macrovipera lebetinus (Levantine viper) protein is Snaclec lebecetin subunit alpha.